The following is a 955-amino-acid chain: Auxin response factor 11 (955 aa).

The segment at residues 143 to 245 (FCKNLTASDT…QLLLGVRRAT (103 aa)) is a DNA-binding region (TF-B3). Over residues 518–543 (ESKLNATSRDPRNTDSYTSRSTSEQN) the composition is skewed to polar residues. Disordered regions lie at residues 518-573 (ESKL…LSSA) and 609-646 (TQGN…KSVN). Positions 551–560 (KTRRSKKGLP) are enriched in basic residues. Residues 852 to 936 (RTYTKVQKQG…RCIRILSPSE (85 aa)) form the PB1 domain.

It belongs to the ARF family. Homodimers and heterodimers.

The protein localises to the nucleus. In terms of biological role, auxin response factors (ARFs) are transcriptional factors that bind specifically to the DNA sequence 5'-TGTCTC-3' found in the auxin-responsive promoter elements (AuxREs). This Oryza sativa subsp. indica (Rice) protein is Auxin response factor 11 (ARF11).